Consider the following 394-residue polypeptide: Chaperone protein DnaJ (394 aa).

Residues 4–68 (DYYEILGVSR…ELKARYDRFG (65 aa)) form the J domain. The CR-type zinc-finger motif lies at 136 to 218 (GGEKQIRISH…CNGEGLAQTT (83 aa)). Zn(2+)-binding residues include Cys-149, Cys-152, Cys-166, Cys-169, Cys-192, Cys-195, Cys-206, and Cys-209. 4 CXXCXGXG motif repeats span residues 149-156 (CNVCGGSG), 166-173 (CPTCGGSG), 192-199 (CPTCGGSG), and 206-213 (CYNCNGEG).

The protein belongs to the DnaJ family. Homodimer. The cofactor is Zn(2+).

It localises to the cytoplasm. Participates actively in the response to hyperosmotic and heat shock by preventing the aggregation of stress-denatured proteins and by disaggregating proteins, also in an autonomous, DnaK-independent fashion. Unfolded proteins bind initially to DnaJ; upon interaction with the DnaJ-bound protein, DnaK hydrolyzes its bound ATP, resulting in the formation of a stable complex. GrpE releases ADP from DnaK; ATP binding to DnaK triggers the release of the substrate protein, thus completing the reaction cycle. Several rounds of ATP-dependent interactions between DnaJ, DnaK and GrpE are required for fully efficient folding. Also involved, together with DnaK and GrpE, in the DNA replication of plasmids through activation of initiation proteins. The chain is Chaperone protein DnaJ from Synechococcus sp. (strain JA-2-3B'a(2-13)) (Cyanobacteria bacterium Yellowstone B-Prime).